The chain runs to 319 residues: Syntaxin ufe1 (319 aa).

The Cytoplasmic portion of the chain corresponds to 1-297; the sequence is MTSRTNEFFG…IKAKSRSSRT (297 aa). One can recognise a t-SNARE coiled-coil homology domain in the interval 228 to 290; that stretch reads LQEFEHTMER…SGGNQQLIKA (63 aa). A helical; Anchor for type IV membrane protein membrane pass occupies residues 298–315; it reads ARLLFCIFTVMGLLLLSL. Residues 316–319 lie on the Lumenal side of the membrane; it reads DRIV.

This sequence belongs to the syntaxin family. Component of a SNARE complex consisting of ufe1, use1, sec20 and sec22 or ykt6. Interacts with sad1.

It is found in the endoplasmic reticulum membrane. In terms of biological role, syntaxin required for targeting and fusion of Golgi-derived retrograde transport vesicles with the ER. The protein is Syntaxin ufe1 (ufe1) of Schizosaccharomyces pombe (strain 972 / ATCC 24843) (Fission yeast).